The primary structure comprises 343 residues: Squamosa promoter-binding-like protein 11 (343 aa).

The tract at residues 1–48 is disordered; the sequence is MECNPVSSTTSSSLLWDWDATASAEPPPPPGKRGGRDSSSASASAKRG. Low complexity-rich tracts occupy residues 7 to 19 and 37 to 48; these read SSTTSSSLLWDWD and DSSSASASAKRG. The SBP-type zinc-finger motif lies at 64–141; that stretch reads APRCQVEGCG…SDHNARRRKP (78 aa). Zn(2+)-binding residues include Cys67, Cys72, Cys89, His92, Cys108, Cys111, His115, and Cys127. Positions 124-140 match the Bipartite nuclear localization signal motif; the sequence is KRSCRRRLSDHNARRRK.

As to expression, expressed in stems, leaf sheaths, and young panicles.

The protein resides in the nucleus. In terms of biological role, trans-acting factor that binds specifically to the consensus nucleotide sequence 5'-TNCGTACAA-3'. May be involved in panicle development. This Oryza sativa subsp. japonica (Rice) protein is Squamosa promoter-binding-like protein 11 (SPL11).